Reading from the N-terminus, the 469-residue chain is Adenosylhomocysteinase (469 aa).

T63, D139, and E164 together coordinate substrate. 165–167 (TTT) provides a ligand contact to NAD(+). Substrate is bound by residues K194 and D198. NAD(+)-binding positions include N199, 228–233 (GYGDVG), E251, N300, 321–323 (IGH), and N375.

It belongs to the adenosylhomocysteinase family. It depends on NAD(+) as a cofactor.

The protein resides in the cytoplasm. It catalyses the reaction S-adenosyl-L-homocysteine + H2O = L-homocysteine + adenosine. It participates in amino-acid biosynthesis; L-homocysteine biosynthesis; L-homocysteine from S-adenosyl-L-homocysteine: step 1/1. Its function is as follows. May play a key role in the regulation of the intracellular concentration of adenosylhomocysteine. The polypeptide is Adenosylhomocysteinase (Pseudomonas fluorescens (strain Pf0-1)).